The primary structure comprises 216 residues: LexA repressor (216 aa).

The H-T-H motif DNA-binding region spans 29–49 (RAEIAQALGFRSPNAAEDHLK). Residues S134 and K171 each act as for autocatalytic cleavage activity in the active site.

The protein belongs to the peptidase S24 family. Homodimer.

The enzyme catalyses Hydrolysis of Ala-|-Gly bond in repressor LexA.. Its function is as follows. Represses a number of genes involved in the response to DNA damage (SOS response), including recA and lexA. In the presence of single-stranded DNA, RecA interacts with LexA causing an autocatalytic cleavage which disrupts the DNA-binding part of LexA, leading to derepression of the SOS regulon and eventually DNA repair. This chain is LexA repressor, found in Bordetella bronchiseptica (strain ATCC BAA-588 / NCTC 13252 / RB50) (Alcaligenes bronchisepticus).